A 68-amino-acid polypeptide reads, in one-letter code: MLINVSIKLIKLYQRLAPQKIRDACRFEPTCSNYAILALQKYGFWKGWKMALNRLGRCKYPNGGEDLP.

The protein to bacterial proteins yidD.

This is an uncharacterized protein from Haemophilus influenzae (Bacteriophage HP1).